A 105-amino-acid polypeptide reads, in one-letter code: Vacuolar ATPase assembly integral membrane protein VMA21 homolog (105 aa).

Positions 1 to 26 are disordered; that stretch reads MSTKNKKAAGGNGGAPKQTRQQSHDS. The Cytoplasmic portion of the chain corresponds to 1–36; sequence MSTKNKKAAGGNGGAPKQTRQQSHDSQDYSSFKTVL. A helical membrane pass occupies residues 37–57; that stretch reads FYCMLIVFLPVLTFFVLKGFV. The Lumenal portion of the chain corresponds to 58-68; it reads LDQFLDISEVK. Residues 69 to 89 form a helical membrane-spanning segment; that stretch reads VNIASAVGAVVALHIALGLYI. Over 90 to 105 the chain is Cytoplasmic; sequence YRAYFGTTGSKASKTD.

The protein belongs to the VMA21 family.

The protein resides in the endoplasmic reticulum membrane. It is found in the endoplasmic reticulum-Golgi intermediate compartment membrane. The protein localises to the cytoplasmic vesicle. Its subcellular location is the COPII-coated vesicle membrane. In terms of biological role, required for the assembly of the V0 complex of the vacuolar ATPase (V-ATPase) in the endoplasmic reticulum. This chain is Vacuolar ATPase assembly integral membrane protein VMA21 homolog, found in Drosophila erecta (Fruit fly).